Reading from the N-terminus, the 141-residue chain is HTH-type transcriptional repressor NsrR (141 aa).

Residues 2 to 129 (QLTNFTDFGL…DQHTIQDMLT (128 aa)) enclose the HTH rrf2-type domain. The H-T-H motif DNA-binding region spans 28–51 (ITVVTETFDVSRNHMVKIINKLGQ). 3 residues coordinate [2Fe-2S] cluster: Cys91, Cys96, and Cys102.

The cofactor is [2Fe-2S] cluster.

Functionally, nitric oxide-sensitive repressor of genes involved in protecting the cell against nitrosative stress. May require iron for activity. This is HTH-type transcriptional repressor NsrR from Aliivibrio salmonicida (strain LFI1238) (Vibrio salmonicida (strain LFI1238)).